Here is a 1381-residue protein sequence, read N- to C-terminus: Contactin-associated protein 1 (1381 aa).

The N-terminal stretch at 1 to 20 (MMSLRLFSILLAAVVSGAQG) is a signal peptide. Residues 21–1284 (WGYYGCNEEL…PYYHDDGWIA (1264 aa)) lie on the Extracellular side of the membrane. The 144-residue stretch at 26-169 (CNEELVGPLY…IGLRLGIYGC (144 aa)) folds into the F5/8 type C domain. A disulfide bridge links Cys26 with Cys169. Residues Asn121, Asn129, and Asn277 are each glycosylated (N-linked (GlcNAc...) asparagine). 2 consecutive Laminin G-like domains span residues 204–356 (FKTE…AFRC) and 390–539 (FRTW…FDTC). A disulfide bridge links Cys324 with Cys356. Residues Asn421, Asn500, and Asn519 are each glycosylated (N-linked (GlcNAc...) asparagine). 4 cysteine pairs are disulfide-bonded: Cys507/Cys539, Cys545/Cys556, Cys550/Cys565, and Cys567/Cys577. The 33-residue stretch at 544 to 576 (RCSPNMCEHDGRCYQSWDDFICYCELTGYKGVT) folds into the EGF-like 1 domain. Residues 577–796 (CHEPLYKESC…NTISFRTGAA (220 aa)) enclose the Fibrinogen C-terminal domain. N-linked (GlcNAc...) asparagine glycans are attached at residues Asn598, Asn654, Asn665, Asn764, Asn805, Asn844, Asn861, Asn949, and Asn957. A Laminin G-like 3 domain is found at 814–958 (FRTSAPSGVF…NASEGTFPNC (145 aa)). 4 disulfide bridges follow: Cys931–Cys958, Cys962–Cys975, Cys969–Cys984, and Cys986–Cys996. Residues 962–996 (CTHPRFPCFHGGRCVERYSYYTCDCDLTAFDGPYC) enclose the EGF-like 2 domain. 2 N-linked (GlcNAc...) asparagine glycosylation sites follow: Asn1079 and Asn1148. One can recognise a Laminin G-like 4 domain in the interval 1089–1251 (FSTSSAPAVL…VQGELSESNC (163 aa)). Cys1210 and Cys1251 are oxidised to a cystine. Residues 1285-1305 (ILLGFLVAFLLLGLVGMLVLF) form a helical membrane-spanning segment. The Cytoplasmic segment spans residues 1306 to 1381 (YLQNHRYKGS…PQILEESRSE (76 aa)). The segment at 1317–1381 (HTNEPKATHD…PQILEESRSE (65 aa)) is disordered. Residues 1319 to 1329 (NEPKATHDSHP) show a composition bias toward basic and acidic residues. Residues 1329-1366 (PGGKAPLPPSGPAQAPAPTPAPTQVPTPAPAPASGPGP) carry the SH3-binding motif. Residues 1334 to 1363 (PLPPSGPAQAPAPTPAPTQVPTPAPAPASG) are compositionally biased toward pro residues. At Ser1380 the chain carries Phosphoserine.

This sequence belongs to the neurexin family. Interacts with CNTN1/contactin in cis form. As to expression, predominantly expressed in brain. In myelinated nerve fibers of the CNS predominantly found in paranodal axoglial junctions. In unmyelinated nerve fibers of the CNS diffusely distributed along the entire surface. Weak expression is detected in ovary, pancreas, colon, lung, heart, intestine and testis.

Its subcellular location is the membrane. The protein localises to the cell junction. It is found in the paranodal septate junction. Its function is as follows. Required, with CNTNAP2, for radial and longitudinal organization of myelinated axons. Plays a role in the formation of functional distinct domains critical for saltatory conduction of nerve impulses in myelinated nerve fibers. Demarcates the paranodal region of the axo-glial junction. In association with contactin involved in the signaling between axons and myelinating glial cells. This is Contactin-associated protein 1 (Cntnap1) from Rattus norvegicus (Rat).